The sequence spans 921 residues: TRPM8 channel-associated factor 1 (921 aa).

Positions 542–841 (YCWMSTGLYI…TYLQLQEAFG (300 aa)) constitute a Peptidase M60 domain.

Belongs to the TCAF family. Interacts with TRPM8 (via N-terminus and C-terminus domains); the interaction inhibits TRPM8 channel activity. Interacts with TRPV6. As to expression, isoform 2 is expressed in the prostate and strongly expressed in cancerous prostate samples.

It localises to the cell membrane. Its function is as follows. Positively regulates the plasma membrane cation channel TRPM8 activity. Involved in the recruitment of TRPM8 to the cell surface. Promotes prostate cancer cell migration inhibition in a TRPM8-dependent manner. This chain is TRPM8 channel-associated factor 1, found in Homo sapiens (Human).